The chain runs to 221 residues: Putative efflux system component YhbJ (221 aa).

A helical transmembrane segment spans residues 17 to 37 (LILTNIIGLIVVLAIIAGGAY).

This sequence belongs to the membrane fusion protein (MFP) (TC 8.A.1) family.

It localises to the cell membrane. This Bacillus subtilis (strain 168) protein is Putative efflux system component YhbJ (yhbJ).